Consider the following 140-residue polypeptide: Vesicle transport protein GOT1 (140 aa).

4 helical membrane-spanning segments follow: residues Ile12 to Phe32, Gly35 to Asn55, Ile71 to Leu91, and Phe96 to Leu116.

It belongs to the GOT1 family. In terms of assembly, homodimer. No interactions with STL1, STL2, CESA1, CESA3, CESA4, CESA6, CESA7 or CESA8.

The protein localises to the golgi apparatus membrane. May be involved in fusion of ER-derived transport vesicles with the Golgi complex. The sequence is that of Vesicle transport protein GOT1 from Arabidopsis thaliana (Mouse-ear cress).